Here is a 536-residue protein sequence, read N- to C-terminus: Probable galacturonosyltransferase 10 (536 aa).

The Cytoplasmic portion of the chain corresponds to 1 to 16 (MRRRGGDSFRRAGRRK). The helical; Signal-anchor for type II membrane protein transmembrane segment at 17-37 (ISNVVWWVLSGIALLLFFLIL) threads the bilayer. Topologically, residues 38–536 (SKAGHIEPRP…SPFMQQCNFH (499 aa)) are lumenal. Asparagine 64, asparagine 246, asparagine 300, asparagine 403, and asparagine 436 each carry an N-linked (GlcNAc...) asparagine glycan.

The protein belongs to the glycosyltransferase 8 family. As to expression, expressed in roots, inflorescences, siliques, leaves and stems.

It is found in the golgi apparatus membrane. The protein operates within glycan metabolism; pectin biosynthesis. May be involved in pectin and/or xylans biosynthesis in cell walls. In Arabidopsis thaliana (Mouse-ear cress), this protein is Probable galacturonosyltransferase 10 (GAUT10).